Consider the following 560-residue polypeptide: Glutamate--tRNA ligase, chloroplastic/mitochondrial (560 aa).

Residue 47–49 coordinates L-glutamate; that stretch reads RFA. A 'HIGH' region motif is present at residues 50–60; the sequence is PSPTGNLHVGG. ATP is bound at residue His57. L-glutamate contacts are provided by residues Glu83, 235 to 239, and Arg253; that span reads YNFCV. ATP contacts are provided by residues Glu256 and 291-295; that span reads KLSKR. The 'KMSKS' region signature appears at 291 to 295; it reads KLSKR.

This sequence belongs to the class-I aminoacyl-tRNA synthetase family. Glutamate--tRNA ligase type 1 subfamily.

It localises to the plastid. The protein resides in the chloroplast. It is found in the mitochondrion. The catalysed reaction is tRNA(Glu) + L-glutamate + ATP = L-glutamyl-tRNA(Glu) + AMP + diphosphate. Its function is as follows. Catalyzes the attachment of glutamate to tRNA(Glu) in a two-step reaction: glutamate is first activated by ATP to form Glu-AMP and then transferred to the acceptor end of tRNA(Glu). The sequence is that of Glutamate--tRNA ligase, chloroplastic/mitochondrial from Hordeum vulgare (Barley).